We begin with the raw amino-acid sequence, 184 residues long: Envelope protein 169 (184 aa).

The Intravirion segment spans residues 1 to 6 (MKKYIK). A helical transmembrane segment spans residues 7–27 (MYLVLLIAIILFITILVIFLI). The Virion surface segment spans residues 28 to 184 (SGLFYPEQNP…TVMAIPRKVL (157 aa)).

Belongs to the asfivirus envelope protein p22 family.

It is found in the virion membrane. Its subcellular location is the host cell membrane. This Ornithodoros (relapsing fever ticks) protein is Envelope protein 169.